A 552-amino-acid chain; its full sequence is BAR/IMD domain-containing adapter protein 2 (552 aa).

One can recognise an IMD domain in the interval 1 to 250; sequence MSLSRSEEMH…VQLMQQVASN (250 aa). The stretch at 132–153 forms a coiled coil; it reads DALDKCQAELKKLRKKSQGSKN. S261 carries the phosphoserine modification. The segment at 295–369 is disordered; sequence STPIMNGVTG…TLPRSSSMAA (75 aa). Phosphothreonine is present on T296. Low complexity predominate over residues 320 to 334; the sequence is QPKSLSPPQSQSKLS. 3 positions are modified to phosphoserine: S323, S325, and S336. Residue T340 is modified to Phosphothreonine. At S346 the chain carries Phosphoserine. The segment covering 348 to 367 has biased composition (polar residues); that stretch reads TPKNSYATTENKTLPRSSSM. Phosphothreonine is present on T360. Phosphoserine is present on residues S366, S384, S395, and S454. One can recognise an SH3 domain in the interval 374–437; it reads NGRMRVKAIF…PFSYTRVLDS (64 aa). Over residues 447-457 the composition is skewed to polar residues; it reads LQQGKSSSTGN. Disordered stretches follow at residues 447–466 and 525–552; these read LQQGKSSSTGNLLDKDDLAI and TNDRCDLSAQGPEGREHGDGSARTLAGR.

Homodimer. Interacts with CDC42 and RAC1 that have been activated by GTP binding. Interacts with ATN1, ADGRB1, EPS8, SHANK1, SHANK2, SHANK3, WASF1 and WASF2. Interacts with ENAH after recruitment of CDC42. Interacts with TIAM1 and DIAPH1. Interacts (via SH3 domain) with E.coli effector protein EspF(U) (via PXXP motifs). Interacts with E.coli intimin receptor Tir. Post-translationally, phosphorylated on tyrosine residues by INSR in response to insulin treatment. Isoform 1 and isoform 4 are expressed almost exclusively in brain. Isoform 4 is barely detectable in placenta, prostate and testis. A short isoform is ubiquitous, with the highest expression in liver, prostate, testis and placenta.

The protein localises to the cytoplasm. The protein resides in the membrane. Its subcellular location is the cell projection. It is found in the filopodium. It localises to the ruffle. The protein localises to the cytoskeleton. In terms of biological role, adapter protein that links membrane-bound small G-proteins to cytoplasmic effector proteins. Necessary for CDC42-mediated reorganization of the actin cytoskeleton and for RAC1-mediated membrane ruffling. Involved in the regulation of the actin cytoskeleton by WASF family members and the Arp2/3 complex. Plays a role in neurite growth. Acts syngeristically with ENAH to promote filipodia formation. Plays a role in the reorganization of the actin cytoskeleton in response to bacterial infection. Participates in actin bundling when associated with EPS8, promoting filopodial protrusions. The chain is BAR/IMD domain-containing adapter protein 2 (BAIAP2) from Homo sapiens (Human).